The following is a 180-amino-acid chain: Protein Flattop (180 aa).

The disordered stretch occupies residues 111-180 (PQISGKASGK…AGDKVLQAQS (70 aa)).

The protein belongs to the Flattop family.

It localises to the cytoplasm. Its subcellular location is the cytoskeleton. It is found in the cilium basal body. The protein resides in the cell projection. The protein localises to the cilium. It localises to the apical cell membrane. Its subcellular location is the cilium axoneme. In terms of biological role, microtubule inner protein (MIP) part of the dynein-decorated doublet microtubules (DMTs) in cilia axoneme. Acts as a regulator of cilium basal body docking and positioning in mono- and multiciliated cells. Regulates basal body docking and cilia formation in multiciliated lung cells. Regulates kinocilium positioning and stereocilia bundle morphogenesis in the inner ear. The chain is Protein Flattop from Xenopus laevis (African clawed frog).